We begin with the raw amino-acid sequence, 278 residues long: MGKEKWCYINSGQCSPAFNMALDECLLNWQSEKKMPPTIRFYEWEVPTLTVGYFQRVEKDINMDVVNEKKYGFVRRQTGGRGVLHDKELTYSVIVSEDHPNMPKTVTEAYRVISQGLLDGFKALGLEAYYAVPKTEADRENLKNPRSGVCFDAPSWYEIVVEGRKIAGSAQTRQKGVILQHGSIPLEIDLDELYDLFLFPNERVKERMKSMFASKAVAINELTDRTFTIEQLIKAFEVGFEKGLDVELVPYELTEEQLHEVQTLAKEKYESKEWNYKK.

Residues 33–248 (KKMPPTIRFY…GFEKGLDVEL (216 aa)) enclose the BPL/LPL catalytic domain. Cys150 acts as the Acyl-thioester intermediate in catalysis.

Belongs to the octanoyltransferase LipM family. Monomer.

It carries out the reaction octanoyl-[ACP] + L-lysyl-[protein] = N(6)-octanoyl-L-lysyl-[protein] + holo-[ACP] + H(+). Its pathway is protein modification; protein lipoylation via endogenous pathway; protein N(6)-(lipoyl)lysine from octanoyl-[acyl-carrier-protein]. Its function is as follows. Catalyzes the transfer of endogenously produced octanoic acid from octanoyl-acyl-carrier-protein onto the lipoyl domain of GcvH, an intermediate carrier during protein lipoylation. This is Octanoyltransferase LipM from Bacillus anthracis.